A 447-amino-acid polypeptide reads, in one-letter code: UDP-N-acetyl-alpha-D-muramoyl-L-alanyl-L-glutamate epimerase (447 aa).

The protein belongs to the MurL family.

It catalyses the reaction UDP-N-acetyl-alpha-D-muramoyl-L-alanyl-L-glutamate + ATP + H2O = UDP-N-acetyl-alpha-D-muramoyl-L-alanyl-D-glutamate + AMP + diphosphate + H(+). The protein operates within cell wall biogenesis; peptidoglycan biosynthesis. In terms of biological role, cell wall formation. Catalyzes epimerization of the terminal L-glutamate in UDP-N-acetyl-alpha-D-muramoyl-L-alanyl-L-glutamate. This chain is UDP-N-acetyl-alpha-D-muramoyl-L-alanyl-L-glutamate epimerase, found in Micromonospora sp. (strain ATCC 39149 / NRRL 15099 / SCC 1413).